Here is a 230-residue protein sequence, read N- to C-terminus: Type II restriction enzyme NlaIII (230 aa).

The enzyme catalyses Endonucleolytic cleavage of DNA to give specific double-stranded fragments with terminal 5'-phosphates.. Functionally, a P subtype restriction enzyme that recognizes the double-stranded sequence 5'-CATG-3' and cleaves after G-4. This is Type II restriction enzyme NlaIII (nlaIIIR) from Neisseria lactamica.